Consider the following 215-residue polypeptide: Pyrrolidone-carboxylate peptidase (215 aa).

Residues Glu-80, Cys-143, and His-167 contribute to the active site.

It belongs to the peptidase C15 family. As to quaternary structure, homotetramer.

Its subcellular location is the cytoplasm. It carries out the reaction Release of an N-terminal pyroglutamyl group from a polypeptide, the second amino acid generally not being Pro.. Its function is as follows. Removes 5-oxoproline from various penultimate amino acid residues except L-proline. This is Pyrrolidone-carboxylate peptidase from Yersinia pestis bv. Antiqua (strain Antiqua).